The following is a 129-amino-acid chain: UPF0344 protein USA300HOU_0928 (129 aa).

A run of 4 helical transmembrane segments spans residues 1 to 21, 36 to 56, 67 to 87, and 99 to 119; these read MLHL…ATYL, LHMI…WILI, MLLT…EVSI, and MFWI…ILPL.

It belongs to the UPF0344 family.

It is found in the cell membrane. This chain is UPF0344 protein USA300HOU_0928, found in Staphylococcus aureus (strain USA300 / TCH1516).